The primary structure comprises 117 residues: DNA-binding protein VNG_2008H (117 aa).

The interval 1–59 (MSGNPDDDRLEELRQRKKEQLKQQQQGGDAEREAQQQQAQQAEQQKQAMLKQNLTDGAR) is disordered. Basic and acidic residues predominate over residues 11–21 (EELRQRKKEQL). Low complexity predominate over residues 35 to 48 (QQQQAQQAEQQKQA).

It belongs to the PDCD5 family.

The polypeptide is DNA-binding protein VNG_2008H (Halobacterium salinarum (strain ATCC 700922 / JCM 11081 / NRC-1) (Halobacterium halobium)).